The following is a 594-amino-acid chain: Sucrose transport protein SUC3 (594 aa).

Ser2 bears the N-acetylserine mark. At 2-58 the chain is on the cytoplasmic side; that stretch reads SDSVSISVPYRNLRKEIELETVTKHRQNESGSSSFSESASPSNHSDSADGESVSKNC. Residues 23–50 form a disordered region; the sequence is VTKHRQNESGSSSFSESASPSNHSDSAD. The span at 31 to 46 shows a compositional bias: low complexity; that stretch reads SGSSSFSESASPSNHS. A helical membrane pass occupies residues 59–79; that stretch reads SLVTLVLSCTVAAGVQFGWAL. Residues 80–98 are Extracellular-facing; it reads QLSLLTPYIQTLGISHAFS. A helical transmembrane segment spans residues 99-119; the sequence is SFIWLCGPITGLVVQPFVGIW. Over 120–131 the chain is Cytoplasmic; it reads SDKCTSKYGRRR. A helical transmembrane segment spans residues 132–152; that stretch reads PFILVGSFMISIAVIIIGFSA. At 153 to 174 the chain is on the extracellular side; it reads DIGYLLGDSKEHCSTFKGTRTR. Residues 175-195 traverse the membrane as a helical segment; it reads AAVVFIIGFWLLDLANNTVQG. The Cytoplasmic segment spans residues 196–214; sequence PARALLADLSGPDQRNTAN. The chain crosses the membrane as a helical span at residues 215-235; that stretch reads AVFCLWMAIGNILGFSAGASG. The Extracellular portion of the chain corresponds to 236-257; that stretch reads KWQEWFPFLTSRACCAACGNLK. Residues 258–278 form a helical membrane-spanning segment; the sequence is AAFLLAVVFLTICTLVTIYFA. Topologically, residues 279–365 are cytoplasmic; it reads KEIPFTSNKP…LTSLRHLPPA (87 aa). The helical transmembrane segment at 366–386 threads the bilayer; the sequence is MHSVLIVMALTWLSWFPFFLF. Topologically, residues 387-417 are extracellular; that stretch reads DTDWMGREVYHGDPTGDSLHMELYDQGVREG. A helical membrane pass occupies residues 418–438; that stretch reads ALGLLLNSVVLGISSFLIEPM. Residues 439-445 lie on the Cytoplasmic side of the membrane; the sequence is CQRMGAR. A helical transmembrane segment spans residues 446–466; that stretch reads VVWALSNFTVFACMAGTAVIS. Residues 467 to 489 are Extracellular-facing; that stretch reads LMSLSDDKNGIEYIMRGNETTRT. The N-linked (GlcNAc...) asparagine glycan is linked to Asn484. Residues 490 to 510 traverse the membrane as a helical segment; it reads AAVIVFALLGFPLAITYSVPF. Topologically, residues 511–525 are cytoplasmic; that stretch reads SVTAEVTADSGGGQG. The helical transmembrane segment at 526–546 threads the bilayer; that stretch reads LAIGVLNLAIVIPQMIVSLGA. Over 547 to 555 the chain is Extracellular; the sequence is GPWDQLFGG. Residues 556–576 form a helical membrane-spanning segment; the sequence is GNLPAFVLASVAAFAAGVIAL. Over 577–594 the chain is Cytoplasmic; that stretch reads QRLPTLSSSFKSTGFHIG.

This sequence belongs to the glycoside-pentoside-hexuronide (GPH) cation symporter transporter (TC 2.A.2.4) family. As to quaternary structure, homodimer. Interacts with SUC2 and SUC4. As to expression, mostly localized in parenchymatic cells next to vascular tissues (at protein level). Present in stipules, trichomes, hydathodes and guard cells of source leaves, as well as in lateral root tips and flowers.

It is found in the cell membrane. It carries out the reaction sucrose(out) + H(+)(out) = sucrose(in) + H(+)(in). It participates in glycan biosynthesis; sucrose metabolism. Its activity is regulated as follows. Inhibited by protonophores (e.g. dinitrophenol and carbonyl cyanide m-chlorophenyl-hydrazone (CCCP)) and SH group inhibitors (e.g. p-chloromercuribenzene sulphonic acid (PCMBS)). In terms of biological role, responsible for the transport of sucrose into the cell, with the concomitant uptake of protons (symport system). Can also transport maltose at a lesser rate. May also transport biotin. Probably involved in carpel maturation that leads to pod shatter and seed dispersal. The chain is Sucrose transport protein SUC3 from Arabidopsis thaliana (Mouse-ear cress).